The chain runs to 55 residues: Conotoxin Cal22d (55 aa).

Positions 1–5 (GRPSA) are excised as a propeptide.

In terms of processing, contains 4 disulfide bonds. Expressed by the venom duct.

Its subcellular location is the secreted. In terms of biological role, probable neurotoxin with unknown target. Possibly targets ion channels. This Californiconus californicus (California cone) protein is Conotoxin Cal22d.